Consider the following 188-residue polypeptide: Cytochrome c-type protein NrfB (188 aa).

The signal sequence occupies residues 1 to 32 (MSVLRSLLTAGVLASGLLWSLNGITATPAAQA). Positions 49, 52, 53, 78, 81, 82, 113, 116, 117, 138, 141, 142, 163, 166, and 167 each coordinate heme.

Post-translationally, binds 5 heme groups per subunit.

The protein resides in the periplasm. It participates in energy metabolism; nitrogen metabolism. Functionally, plays a role in nitrite reduction. The polypeptide is Cytochrome c-type protein NrfB (nrfB) (Escherichia coli O6:H1 (strain CFT073 / ATCC 700928 / UPEC)).